A 277-amino-acid polypeptide reads, in one-letter code: Protein OPG166 (277 aa).

Residues Asn29 and Asn58 are each glycosylated (N-linked (GlcNAc...) asparagine; by host). The next 5 membrane-spanning stretches (helical) occupy residues 124–144, 156–176, 186–206, 219–239, and 247–267; these read TMLMFIFTGITLFLLFLEIAY, GILQVFGCVIAMIELCGAFLF, IIGLLMMTLPSIFLIITKVFS, LIIYYQLAGYILTVLGLGLSL, and LLLSGLGTIMVSEHFGLLFLV.

The protein belongs to the orthopoxvirus OPG166 protein family.

The protein localises to the host membrane. Promotes, when overexpressed, the influx of extracellular Ca(2+), leading to membrane permeability and host cell necrosis. This Cynomys gunnisoni (Gunnison's prairie dog) protein is Protein OPG166 (OPG166).